Consider the following 567-residue polypeptide: 25S rRNA (cytosine-C(5))-methyltransferase NSUN5 (567 aa).

The segment covering 1 to 17 has biased composition (basic residues); sequence MVARRNKPKAPLVKHRF. The tract at residues 1-88 is disordered; it reads MVARRNKPKA…KTPPATKQKF (88 aa). S-adenosyl-L-methionine contacts are provided by residues 312–318, glutamate 336, aspartate 363, and aspartate 383; that span reads CSAPGNK. Cysteine 444 (nucleophile) is an active-site residue.

The protein belongs to the class I-like SAM-binding methyltransferase superfamily. RsmB/NOP family.

It carries out the reaction a cytidine in 25S rRNA + S-adenosyl-L-methionine = a 5-methylcytidine in 25S rRNA + S-adenosyl-L-homocysteine + H(+). Its function is as follows. S-adenosyl-L-methionine-dependent methyltransferase that specifically methylates the C(5) position of cytosine 2268 (m5C2268) in 25S rRNA. This Arabidopsis thaliana (Mouse-ear cress) protein is 25S rRNA (cytosine-C(5))-methyltransferase NSUN5.